The sequence spans 115 residues: Small ribosomal subunit protein bS18c (115 aa).

The segment at 91–115 (TNALKARTQNKDQKKEKFQINKKKK) is disordered. A compositionally biased stretch (basic and acidic residues) spans 99–109 (QNKDQKKEKFQ).

Belongs to the bacterial ribosomal protein bS18 family. In terms of assembly, part of the 30S ribosomal subunit.

The protein resides in the plastid. The protein localises to the chloroplast. This Ipomoea purpurea (Common morning glory) protein is Small ribosomal subunit protein bS18c.